The primary structure comprises 370 residues: 4-hydroxy-3-methylbut-2-en-1-yl diphosphate synthase (flavodoxin) (370 aa).

[4Fe-4S] cluster is bound by residues Cys270, Cys273, Cys305, and Glu312.

The protein belongs to the IspG family. It depends on [4Fe-4S] cluster as a cofactor.

It carries out the reaction (2E)-4-hydroxy-3-methylbut-2-enyl diphosphate + oxidized [flavodoxin] + H2O + 2 H(+) = 2-C-methyl-D-erythritol 2,4-cyclic diphosphate + reduced [flavodoxin]. It participates in isoprenoid biosynthesis; isopentenyl diphosphate biosynthesis via DXP pathway; isopentenyl diphosphate from 1-deoxy-D-xylulose 5-phosphate: step 5/6. Converts 2C-methyl-D-erythritol 2,4-cyclodiphosphate (ME-2,4cPP) into 1-hydroxy-2-methyl-2-(E)-butenyl 4-diphosphate. The sequence is that of 4-hydroxy-3-methylbut-2-en-1-yl diphosphate synthase (flavodoxin) from Ectopseudomonas mendocina (strain ymp) (Pseudomonas mendocina).